The chain runs to 1095 residues: Putative disease resistance protein At4g11170 (1095 aa).

Positions 9–173 constitute a TIR domain; sequence WRYDVFPSFR…TISKDVLEKL (165 aa). Residue Glu84 is part of the active site. The region spanning 168-454 is the NB-ARC domain; that stretch reads DVLEKLNATP…HENYLKQMII (287 aa). 6 LRR repeats span residues 609–631, 632–654, 655–677, 679–701, 702–722, and 723–744; these read CLVE…QPLR, NLRT…MEAT, KLNR…IKNL, HLIL…INLP, SLEV…EIST, and NIRL…VKYW.

It carries out the reaction NAD(+) + H2O = ADP-D-ribose + nicotinamide + H(+). The polypeptide is Putative disease resistance protein At4g11170 (Arabidopsis thaliana (Mouse-ear cress)).